The sequence spans 91 residues: Salivary lectin pathway inhibitor (91 aa).

A signal peptide spans 1–21; that stretch reads MGLTETTLVLVSLAFFASAVA. N-linked (GlcNAc...) asparagine glycans are attached at residues asparagine 26 and asparagine 87.

Belongs to the salp14 family. In terms of processing, glycosylated; deglycosylation largely abrogates the complement inhibitory effect. Nymph salivary gland (at protein level). Saliva (at protein level). Not detected in midgut.

The protein resides in the secreted. In terms of biological role, inhibits the lectin pathway of complement system activation in the host by reducing binding of mannose-binding lectin and L-ficolin to their ligands. Does not affect the classical and alternative pathways of complement system activation in the host. Its function is as follows. (Microbial infection) Protects Borrelia garinii (strain A87S) from host complement-mediated killing by preventing deposition of host C5b-9 membrane attack complexes on the surface of spirochetes. Inhibits phagocytosis of B.garinii (strain A87S) by human neutrophils. Impairs Borrelia-induced complement-mediated chemotaxis of human polymorphonuclear leukocytes. Functionally, (Microbial infection) Protects Borrelia burgdorferi (strain N40), which is resistant to normal human serum, from Borrelia-opsonizing antibody-mediated complement-dependent killing. This chain is Salivary lectin pathway inhibitor, found in Ixodes scapularis (Black-legged tick).